We begin with the raw amino-acid sequence, 294 residues long: Protease HtpX homolog 2 (294 aa).

2 helical membrane passes run Met15–Tyr35 and Tyr36–Phe56. His140 contacts Zn(2+). The active site involves Glu141. Residue His144 participates in Zn(2+) binding. A run of 2 helical transmembrane segments spans residues Ala151–Leu171 and Gly185–Ile205. Glu213 serves as a coordination point for Zn(2+).

This sequence belongs to the peptidase M48B family. Requires Zn(2+) as cofactor.

It is found in the cell membrane. This chain is Protease HtpX homolog 2, found in Methanosarcina mazei (strain ATCC BAA-159 / DSM 3647 / Goe1 / Go1 / JCM 11833 / OCM 88) (Methanosarcina frisia).